The chain runs to 513 residues: Alpha-amylase mde5 (513 aa).

The signal sequence occupies residues 1–25 (MKHNEVFGWTLKVLSFLLVVIPANA). Cys-52 and Cys-60 form a disulfide bridge. A substrate-binding site is contributed by Trp-105. Ca(2+) is bound at residue Asn-143. His-144 contacts substrate. Asn-162 is a glycosylation site (N-linked (GlcNAc...) asparagine). An intrachain disulfide couples Cys-171 to Cys-184. Ca(2+)-binding residues include Glu-182 and Asp-195. Residue Arg-224 coordinates substrate. Ca(2+)-binding residues include Asp-226, His-230, and Glu-250. The active-site Nucleophile is Asp-226. 229–230 (KH) is a substrate binding site. Residue Glu-250 is the Proton donor of the active site. Gly-254 is a binding site for substrate. Cys-260 and Cys-304 are joined by a disulfide. Asp-318 lines the substrate pocket. N-linked (GlcNAc...) asparagine glycosylation is present at Asn-357. A substrate-binding site is contributed by Arg-365. Residues Cys-454 and Cys-488 are joined by a disulfide bond.

This sequence belongs to the glycosyl hydrolase 13 family. Ca(2+) serves as cofactor.

Its subcellular location is the endoplasmic reticulum. It catalyses the reaction Endohydrolysis of (1-&gt;4)-alpha-D-glucosidic linkages in polysaccharides containing three or more (1-&gt;4)-alpha-linked D-glucose units.. In Schizosaccharomyces pombe (strain 972 / ATCC 24843) (Fission yeast), this protein is Alpha-amylase mde5 (mde5).